The primary structure comprises 628 residues: 1-deoxy-D-xylulose-5-phosphate synthase (628 aa).

Thiamine diphosphate is bound by residues histidine 72 and 113 to 115 (GHS). Aspartate 144 contributes to the Mg(2+) binding site. Residues 145-146 (GA), asparagine 173, tyrosine 284, and glutamate 367 contribute to the thiamine diphosphate site. Position 173 (asparagine 173) interacts with Mg(2+).

This sequence belongs to the transketolase family. DXPS subfamily. In terms of assembly, homodimer. The cofactor is Mg(2+). Thiamine diphosphate serves as cofactor.

The catalysed reaction is D-glyceraldehyde 3-phosphate + pyruvate + H(+) = 1-deoxy-D-xylulose 5-phosphate + CO2. The protein operates within metabolic intermediate biosynthesis; 1-deoxy-D-xylulose 5-phosphate biosynthesis; 1-deoxy-D-xylulose 5-phosphate from D-glyceraldehyde 3-phosphate and pyruvate: step 1/1. In terms of biological role, catalyzes the acyloin condensation reaction between C atoms 2 and 3 of pyruvate and glyceraldehyde 3-phosphate to yield 1-deoxy-D-xylulose-5-phosphate (DXP). This chain is 1-deoxy-D-xylulose-5-phosphate synthase, found in Exiguobacterium sibiricum (strain DSM 17290 / CCUG 55495 / CIP 109462 / JCM 13490 / 255-15).